The following is a 142-amino-acid chain: Large ribosomal subunit protein uL13 (142 aa).

It belongs to the universal ribosomal protein uL13 family. Part of the 50S ribosomal subunit.

This protein is one of the early assembly proteins of the 50S ribosomal subunit, although it is not seen to bind rRNA by itself. It is important during the early stages of 50S assembly. This Shigella sonnei (strain Ss046) protein is Large ribosomal subunit protein uL13.